We begin with the raw amino-acid sequence, 551 residues long: PA-phosphatase related-family protein DDB_G0268928 (551 aa).

2 stretches are compositionally biased toward polar residues: residues threonine 26 to aspartate 47 and lysine 137 to lysine 152. Disordered regions lie at residues threonine 26–serine 50 and lysine 123–asparagine 172. Residues threonine 153 to asparagine 171 show a composition bias toward low complexity. Transmembrane regions (helical) follow at residues serine 211–tyrosine 231, serine 232–isoleucine 252, leucine 273–leucine 293, isoleucine 346–leucine 366, methionine 393–proline 413, isoleucine 474–methionine 494, and tyrosine 500–phenylalanine 520.

This sequence belongs to the PA-phosphatase related phosphoesterase family.

It is found in the membrane. The sequence is that of PA-phosphatase related-family protein DDB_G0268928 from Dictyostelium discoideum (Social amoeba).